A 152-amino-acid polypeptide reads, in one-letter code: UPF0178 protein YaiI (152 aa).

This sequence belongs to the UPF0178 family.

The sequence is that of UPF0178 protein YaiI from Escherichia coli O17:K52:H18 (strain UMN026 / ExPEC).